The following is an 82-amino-acid chain: Immediate early response 3-interacting protein 1 (82 aa).

Helical transmembrane passes span 2–22 and 62–82; these read AFTL…IAVL and VMRV…LLFG.

The protein belongs to the YOS1 family.

The protein resides in the endoplasmic reticulum membrane. Regulator of endoplasmic reticulum secretion that acts as a key determinant of brain size. Required for secretion of extracellular matrix proteins. Required for correct brain development by depositing sufficient extracellular matrix proteins for tissue integrity and the proliferation of neural progenitors. Acts as a regulator of the unfolded protein response (UPR). The sequence is that of Immediate early response 3-interacting protein 1 from Mus musculus (Mouse).